We begin with the raw amino-acid sequence, 549 residues long: OBERON-like protein (549 aa).

Residues 1 to 56 form a disordered region; that stretch reads MLPPRQQPRPGGLQTSLSLVSPDACGSPNPQERGSTSDQARDSPSESASSRETWPT. Polar residues-rich tracts occupy residues 28–38 and 45–56; these read PNPQERGSTSD and SESASSRETWPT. A PHD-type zinc finger spans residues 224 to 288; it reads LCMCVICYKF…LFRCHACSRT (65 aa). Residues 394 to 520 adopt a coiled-coil conformation; sequence VQEAIRKMEA…YLFEKIKLQE (127 aa). The segment at 519–549 is disordered; sequence QESSRASQSSAGGNDPSQMMYSKIQDLIKNM. Residues 521-538 are compositionally biased toward polar residues; it reads SSRASQSSAGGNDPSQMM.

As to quaternary structure, self-interacts and probably forms heteromers. Binds to VPg of pea seed borne mosaic virus (PSbMV), turnip mosaic virus (TuMV) and lettuce mosaic virus (LMV), but not with VPg of tobacco etch virus (TEV), cowpea mosaic virus (CPMV), tomato black ring virus (TBRV) and grapevine fan leaf virus (GFLV).

Its subcellular location is the nucleus. Functionally, required for the maintenance and/or establishment of both the shoot and root meristems, probably by controlling the expression of the meristem genes and of genes required for auxin responses. Involved in the development of the basal pole and in auxin-mediated root and vascular development in the embryo. Confers sensitivity to turnip mosaic virus (TuMV) probably by promoting viral movement and multiplication via interaction with TuMV VPg. The chain is OBERON-like protein (PVIP) from Nicotiana benthamiana.